The chain runs to 326 residues: MKDDHDAWEPEELVSDNNSSENELQEDQNSSITFLPPSVNKSNPAKSNYYHSTVTDDISKSQPYRLGVDEAGRGPVLGPMVYAVAYCPVDFDLTNYGFADSKTLASLKREELLKLICNKSNELGKNVGWSTMSISARELAAGMLRYRNKYNLNLQAHDTTIDLIKKVYESGINVTEIYVDTVGPPISYQEKLQAHFPQAKVTVTKKADSLFPIVSLASICAKVTRDIQLECARESIRTENWGSGYSSDARTTEWLKVNVDKIFGWKGDIVRYSWKTAKDLLELPSKSQSSIEIDWHEDDDTPTLNFTQKKKPNPASRSWFGSEFYF.

The tract at residues 1 to 47 (MKDDHDAWEPEELVSDNNSSENELQEDQNSSITFLPPSVNKSNPAKS) is disordered. Positions 15–47 (SDNNSSENELQEDQNSSITFLPPSVNKSNPAKS) are enriched in polar residues. The RNase H type-2 domain occupies 63–286 (PYRLGVDEAG…AKDLLELPSK (224 aa)). The a divalent metal cation site is built by Asp-69, Glu-70, and Asp-180.

The protein belongs to the RNase HII family. Eukaryotic subfamily. Requires Mn(2+) as cofactor. It depends on Mg(2+) as a cofactor.

The enzyme catalyses Endonucleolytic cleavage to 5'-phosphomonoester.. Functionally, endonuclease that specifically degrades the RNA of RNA-DNA hybrids. Participates in DNA replication. The sequence is that of Ribonuclease H2 subunit A (rnh201) from Schizosaccharomyces pombe (strain 972 / ATCC 24843) (Fission yeast).